Here is a 405-residue protein sequence, read N- to C-terminus: Putative polysaccharide ligase RT0347 (405 aa).

10 helical membrane-spanning segments follow: residues 23-43 (IAAT…ISFI), 77-97 (LFIA…NSLV), 120-140 (ILYL…LFFI), 156-178 (FGLY…VIII), 201-221 (ISDS…FILA), 227-247 (IFFK…PIIA), 270-290 (LFIW…GYGF), 322-342 (ILQI…CLVY), 353-375 (ISNF…MISY), and 377-397 (IWQT…KLLV).

It belongs to the O-antigen ligase family.

The protein localises to the membrane. The protein is Putative polysaccharide ligase RT0347 of Rickettsia typhi (strain ATCC VR-144 / Wilmington).